A 200-amino-acid chain; its full sequence is Recombination protein RecR (200 aa).

The C4-type zinc finger occupies 58 to 73 (CSVCGNLTDTDPCFIC). Residues 81–176 (DLLCVVERPR…SVTRIAHGLP (96 aa)) enclose the Toprim domain.

Belongs to the RecR family.

In terms of biological role, may play a role in DNA repair. It seems to be involved in an RecBC-independent recombinational process of DNA repair. It may act with RecF and RecO. The sequence is that of Recombination protein RecR from Pelotomaculum thermopropionicum (strain DSM 13744 / JCM 10971 / SI).